Here is an 869-residue protein sequence, read N- to C-terminus: Probable inorganic carbon transporter subunit DabA (869 aa).

A disordered region spans residues 1-32 (MSTATLEQRAKRGEAPRANDAGHCAHPADGAR). Residues 8–17 (QRAKRGEAPR) are compositionally biased toward basic and acidic residues. 4 residues coordinate Zn(2+): C376, D378, H555, and C570.

It belongs to the inorganic carbon transporter (TC 9.A.2) DabA family. In terms of assembly, forms a complex with DabB. Requires Zn(2+) as cofactor.

The protein resides in the cell inner membrane. Functionally, part of an energy-coupled inorganic carbon pump. This chain is Probable inorganic carbon transporter subunit DabA, found in Burkholderia multivorans (strain ATCC 17616 / 249).